The following is a 172-amino-acid chain: UBA-like domain-containing protein 2 (172 aa).

The segment covering 118-130 (PPNQQPVWLPPSS) has biased composition (pro residues). The segment at 118–172 (PPNQQPVWLPPSSPTGHHTLHHHHHHMHPPPSWPPVSQPANGPQTPVISALHGQR) is disordered. Over residues 135–145 (HTLHHHHHHMH) the composition is skewed to basic residues.

It belongs to the UBALD family.

The chain is UBA-like domain-containing protein 2 (ubald2) from Danio rerio (Zebrafish).